The primary structure comprises 84 residues: Large ribosomal subunit protein bL31B (84 aa).

The protein belongs to the bacterial ribosomal protein bL31 family. Type B subfamily. In terms of assembly, part of the 50S ribosomal subunit.

The sequence is that of Large ribosomal subunit protein bL31B from Parabacteroides distasonis (strain ATCC 8503 / DSM 20701 / CIP 104284 / JCM 5825 / NCTC 11152).